The chain runs to 600 residues: UvrABC system protein C (600 aa).

In terms of domain architecture, GIY-YIG spans 15 to 100; the sequence is NSTGVYQYFN…IKQLHPKYNI (86 aa). One can recognise a UVR domain in the interval 203-238; that stretch reads SVLLKNLEKQMLVLAQNENYEEAAKVRDQIAMIKDL.

It belongs to the UvrC family. Interacts with UvrB in an incision complex.

It is found in the cytoplasm. The UvrABC repair system catalyzes the recognition and processing of DNA lesions. UvrC both incises the 5' and 3' sides of the lesion. The N-terminal half is responsible for the 3' incision and the C-terminal half is responsible for the 5' incision. The polypeptide is UvrABC system protein C (Campylobacter jejuni subsp. jejuni serotype O:2 (strain ATCC 700819 / NCTC 11168)).